Consider the following 416-residue polypeptide: MDLLIENARLVTMQEGEQGYLPSPLARVGIRSGKIVALSTVTKGEDSAETESTLNPDHYEQTIDLQSKLLLPGLIDCHTHLVYAGNRANEFEMRLNGVPYEEIAKQGGGILSTVRATREASEEQLIELALPRLDGLLASGITSAEVKSGYGLTLQDEIKMLRAAKALEQERKVKITTTLLAAHALPPEFKGRADDYIQHICDDIIPLVAEEKLATSVDVFCESIGFNLAQTERVFEAAKKHGLHVKGHTEQLSDLGGTTLTAEYSGLSADHIEYLDEVGVRSLANSSTVATLLPGAFYFLRETQLPPIELLRAHKVPMAIATDINPGTSPFADLTLMLNMACTLFRLTPQEALRGVTQNAAKALGYGESRGVIEIGYDADFSIWDIEHPADLSYQVGAKRLVGRIVNGEYVSHGGL.

H78 and H80 together coordinate Fe(3+). Zn(2+) is bound by residues H78 and H80. 3 residues coordinate 4-imidazolone-5-propanoate: R87, Y150, and H183. Y150 serves as a coordination point for N-formimidoyl-L-glutamate. A Fe(3+)-binding site is contributed by H248. H248 lines the Zn(2+) pocket. Q251 contributes to the 4-imidazolone-5-propanoate binding site. D323 lines the Fe(3+) pocket. D323 is a binding site for Zn(2+). Residues N325 and G327 each contribute to the N-formimidoyl-L-glutamate site. Position 328 (T328) interacts with 4-imidazolone-5-propanoate.

The protein belongs to the metallo-dependent hydrolases superfamily. HutI family. Zn(2+) is required as a cofactor. Fe(3+) serves as cofactor.

It localises to the cytoplasm. The catalysed reaction is 4-imidazolone-5-propanoate + H2O = N-formimidoyl-L-glutamate. It participates in amino-acid degradation; L-histidine degradation into L-glutamate; N-formimidoyl-L-glutamate from L-histidine: step 3/3. Its function is as follows. Catalyzes the hydrolytic cleavage of the carbon-nitrogen bond in imidazolone-5-propanoate to yield N-formimidoyl-L-glutamate. It is the third step in the universal histidine degradation pathway. The chain is Imidazolonepropionase from Vibrio campbellii (strain ATCC BAA-1116).